A 363-amino-acid chain; its full sequence is Biotin synthase (363 aa).

Residues serine 13, serine 14, and serine 17 each carry the phosphoserine modification. The Radical SAM core domain occupies lysine 54–lysine 276. [4Fe-4S] cluster-binding residues include cysteine 69, cysteine 73, and cysteine 76. Positions 113, 146, 206, and 280 each coordinate [2Fe-2S] cluster. Positions glutamate 337–leucine 363 are disordered.

This sequence belongs to the radical SAM superfamily. Biotin synthase family. [4Fe-4S] cluster is required as a cofactor. It depends on [2Fe-2S] cluster as a cofactor.

It carries out the reaction (4R,5S)-dethiobiotin + (sulfur carrier)-SH + 2 reduced [2Fe-2S]-[ferredoxin] + 2 S-adenosyl-L-methionine = (sulfur carrier)-H + biotin + 2 5'-deoxyadenosine + 2 L-methionine + 2 oxidized [2Fe-2S]-[ferredoxin]. The protein operates within cofactor biosynthesis; biotin biosynthesis; biotin from 7,8-diaminononanoate: step 2/2. In terms of biological role, catalyzes the last step of biotin biosynthesis, the conversion of dethiobiotin to biotin. The sequence is that of Biotin synthase (bio2) from Schizosaccharomyces pombe (strain 972 / ATCC 24843) (Fission yeast).